Here is a 1247-residue protein sequence, read N- to C-terminus: F-box/WD repeat-containing protein A (1247 aa).

Residues 1 to 214 (MQYVNGNDIS…PATVSGRLAK (214 aa)) enclose the START domain. Disordered regions lie at residues 484-514 (GNKDGNVVSSKNKRKRNKNNENKNNNNDNII) and 552-576 (QQPQQQQQQPQEQQQNHSQLKKEIK). The segment covering 552–566 (QQPQQQQQQPQEQQQ) has biased composition (low complexity). The F-box domain maps to 631 to 677 (NSGFDNLPEEVVQIIFSNLSAINIVNLSLVCKRFKMATDSPILWKNL). Disordered regions lie at residues 697 to 744 (SNLS…QQQQ) and 833 to 856 (GQESPINKNSSDNPKPNAYNKRDN). Low complexity-rich tracts occupy residues 707 to 719 (NSNSGDSADGSSS) and 726 to 744 (QQQNQQQNQQQNQQQQQQQ). The span at 833-846 (GQESPINKNSSDNP) shows a compositional bias: polar residues. WD repeat units follow at residues 895 to 934 (GHNRAIKAVKSEGNSAITVSTEKKIKFWNLNTGQCIGDYE), 945 to 984 (DHTQKSSCIWPLSDYTKVHIGHKNGTVTMVDFIEQPIEVI), 988 to 1025 (RPTNLADGFDFTFPGKYLIWEHTIIHYWDVETSTLLWN), 1029 to 1073 (AHTK…CINT), 1076 to 1114 (GHSYAVNCIEPIGDYMALTGSTDKTLKLWDLRQASTFIS), 1119 to 1158 (KHTGPIRCISYQEKNGIVLSGSDDGSIIAFNLDNWNLSNI), and 1218 to 1247 (NHESAVTCIESDEAGFISGSQNGLVLRWDF).

In terms of assembly, component of an SCF complex including at least culA. Formation of this complex appears to require activity of the MAP kinase erk2. Interacts with regA.

Functionally, substrate recognition component of a SCF (SKP1-CUL1-F-box protein) E3 ubiquitin-protein ligase complex which mediates the ubiquitination and subsequent proteasomal degradation of target proteins. May target the cAMP phosphodiesterase regA for degradation leading to an increase in cAMP and PKA activity. Promotes development of prestalk cells as opposed to prespores within the developing fruiting body. Required for culmination and fruiting body development. In Dictyostelium discoideum (Social amoeba), this protein is F-box/WD repeat-containing protein A (fbxA).